We begin with the raw amino-acid sequence, 282 residues long: NADPH-dependent 7-cyano-7-deazaguanine reductase (282 aa).

Position 88–90 (Ile88–Ser90) interacts with substrate. An NADPH-binding site is contributed by Ser90 to Lys91. Cys190 (thioimide intermediate) is an active-site residue. Residue Asp197 is the Proton donor of the active site. Substrate is bound at residue His229–Glu230. An NADPH-binding site is contributed by Arg258–Gly259.

This sequence belongs to the GTP cyclohydrolase I family. QueF type 2 subfamily. Homodimer.

It is found in the cytoplasm. The catalysed reaction is 7-aminomethyl-7-carbaguanine + 2 NADP(+) = 7-cyano-7-deazaguanine + 2 NADPH + 3 H(+). It participates in tRNA modification; tRNA-queuosine biosynthesis. In terms of biological role, catalyzes the NADPH-dependent reduction of 7-cyano-7-deazaguanine (preQ0) to 7-aminomethyl-7-deazaguanine (preQ1). This Salmonella paratyphi C (strain RKS4594) protein is NADPH-dependent 7-cyano-7-deazaguanine reductase.